The chain runs to 306 residues: Porphobilinogen deaminase (306 aa).

Cys-240 is subject to S-(dipyrrolylmethanemethyl)cysteine.

Belongs to the HMBS family. As to quaternary structure, monomer. The cofactor is dipyrromethane.

It carries out the reaction 4 porphobilinogen + H2O = hydroxymethylbilane + 4 NH4(+). It participates in porphyrin-containing compound metabolism; protoporphyrin-IX biosynthesis; coproporphyrinogen-III from 5-aminolevulinate: step 2/4. Functionally, tetrapolymerization of the monopyrrole PBG into the hydroxymethylbilane pre-uroporphyrinogen in several discrete steps. This chain is Porphobilinogen deaminase, found in Thiobacillus denitrificans (strain ATCC 25259 / T1).